Reading from the N-terminus, the 301-residue chain is Ornithine carbamoyltransferase (301 aa).

Residues 47-50 (STRT), Gln74, Arg98, and 125-128 (HPMQ) each bind carbamoyl phosphate. Residues Asn156, Asp220, and 224 to 225 (SM) each bind L-ornithine. Residues 260 to 261 (CL) and Arg288 contribute to the carbamoyl phosphate site.

The protein belongs to the aspartate/ornithine carbamoyltransferase superfamily. OTCase family.

It localises to the cytoplasm. It carries out the reaction carbamoyl phosphate + L-ornithine = L-citrulline + phosphate + H(+). The protein operates within amino-acid biosynthesis; L-arginine biosynthesis; L-arginine from L-ornithine and carbamoyl phosphate: step 1/3. Reversibly catalyzes the transfer of the carbamoyl group from carbamoyl phosphate (CP) to the N(epsilon) atom of ornithine (ORN) to produce L-citrulline. In Picrophilus torridus (strain ATCC 700027 / DSM 9790 / JCM 10055 / NBRC 100828 / KAW 2/3), this protein is Ornithine carbamoyltransferase.